We begin with the raw amino-acid sequence, 383 residues long: WD repeat-containing protein 55 (383 aa).

Residues 1 to 11 are compositionally biased toward basic and acidic residues; that stretch reads MDRTCEERPAE. A disordered region spans residues 1–33; sequence MDRTCEERPAEDGSDEEDPDSMEAPTRIRDTPE. A compositionally biased stretch (acidic residues) spans 12-21; the sequence is DGSDEEDPDS. Phosphoserine is present on serine 14. 7 WD repeats span residues 36–75, 82–121, 125–163, 166–205, 208–247, 250–289, and 293–332; these read VLEAPASGLAFHPARDLLAAGDVDGDVFVFSYSCQEGETK, HHLKACRAVAFSEDGQKLITVSKDKAIHVLDVEQGQLERR, AHGAPINSLLLVDENVLATGDDTGGICLWDQRKEGPLMD, QHEEYIADMALDPAKKLLLTASGDGCLGIFNIKRRRFELL, PQSGDLTSVTLMKWGKKVACGSSEGTIYLFNWNGFGATSD, ALRAESIDCMVPVTESLLCTGSTDGVIRAVNILPNRVVGS, and HTGEPVEELALSHCGRFLASSGHDQRLKFWDMAQLRAVVV. At serine 354 the chain carries Phosphoserine. Residues 363–383 are disordered; it reads REEGEDSMAQEEKEETGDDSD. Residues 365–383 show a composition bias toward acidic residues; the sequence is EGEDSMAQEEKEETGDDSD. Phosphothreonine is present on threonine 378. A Phosphoserine modification is found at serine 382.

The protein belongs to the WD repeat WDR55 family.

The protein localises to the nucleus. It localises to the nucleolus. It is found in the cytoplasm. Its function is as follows. Nucleolar protein that acts as a modulator of rRNA synthesis. Plays a central role during organogenesis. The protein is WD repeat-containing protein 55 (WDR55) of Homo sapiens (Human).